The chain runs to 413 residues: Protein cycle (413 aa).

A disordered region spans residues 1–43 (MEVQEFCENMEEIEDENYDEEKSARTSDENRKQNHSEIEKRRR). Positions 8-19 (ENMEEIEDENYD) are enriched in acidic residues. Over residues 20-41 (EEKSARTSDENRKQNHSEIEKR) the composition is skewed to basic and acidic residues. In terms of domain architecture, bHLH spans 30–83 (NRKQNHSEIEKRRRDKMNTYINELSSMIPMCFAMQRKLDKLTVLRMAVQHLRGI). The PAS 1 domain occupies 104–175 (DQELKMIILQ…EQLSSLEQCP (72 aa)). Positions 219–242 (NQIKEESDTSSSSRSSTKRKSRLT) are disordered. Residues 297–367 (PASLDNHPNI…ESHKMVMQVP (71 aa)) form the PAS 2 domain. The 42-residue stretch at 372-413 (TQVYRFRCKDNSYIQLQSEWRAFKNPWTSEIDYIIAKNSVFL) folds into the PAC domain.

In terms of assembly, efficient DNA binding requires dimerization with another bHLH protein. Forms a heterodimer with Clock in order to activate PER and TIM transcription. In terms of tissue distribution, expressed in head and ovary.

The protein localises to the nucleus. Functionally, putative transcription factor involved in the generation of biological rhythms. Activates cycling transcription of Period (PER) and Timeless (TIM) by binding to the E-box (5'-CACGTG-3') present in their promoters. The chain is Protein cycle (cyc) from Drosophila melanogaster (Fruit fly).